We begin with the raw amino-acid sequence, 388 residues long: Sphingosine N-acyltransferase-like protein FUM17 (388 aa).

Helical transmembrane passes span 60–80 (SWAL…IHPV) and 113–133 (LWDL…RKFI). An N-linked (GlcNAc...) asparagine glycan is attached at N146. Residues 151–368 (GKQQRFMEQM…LLRNAYRLLF (218 aa)) enclose the TLC domain. The next 4 helical transmembrane spans lie at 166–186 (FAVM…LWIF), 204–224 (IKFY…VLVL), 241–261 (IITI…IGIS), and 339–359 (FITF…LYCL).

This sequence belongs to the sphingosine N-acyltransferase family.

The protein localises to the endoplasmic reticulum membrane. It participates in mycotoxin biosynthesis. In terms of biological role, sphingosine N-acyltransferase-like protein; part of the gene cluster that mediates the biosynthesis of fumonisins B1 (FB1), B2 (FB2), B3 (FB3), and B4 (FB4), which are carcinogenic mycotoxins. May contribute to the biosynthesis of ceramide via interaction with Cer3. Does not confer resistance to FB1. The biosynthesis starts with the FUM1-catalyzed carbon chain assembly from one molecule of acetyl-CoA, eight molecules of malonyl-CoA, and two molecules of methionine (in S-adenosyl form). The C18 polyketide chain is released from the enzyme by a nucleophilic attack of a carbanion, which is derived from R-carbon of alanine by decarboxylation, on the carbonyl carbon of polyketide acyl chain. This step is catalyzed by the pyridoxal 5'-phosphate-dependent aminoacyl transferase FUM8. The resultant 3-keto intermediate is then stereospecifically reduced to a 3-hydroxyl product by reductase FUM13. Subsequent oxidations at C-10 by the cytochrome P450 monooxygenase FUM2, C-14 and C-15 by FUM6, FUM12 or FUM15, tricarballylic esterification of the hydroxyl groups on C-14 and C-15 by acyltransferase FUM14, and C-5 hydroxylation by 2-keto-glutarate-dependent dioxygenase FUM3 furnish the biosynthesis of fumonisins. The tricarballylic moieties are most likely derived from the citric acid cycle, and their addition to the carbon backbone may involve FUM7, FUM10, FUM11 and FUM14. In Gibberella moniliformis (strain M3125 / FGSC 7600) (Maize ear and stalk rot fungus), this protein is Sphingosine N-acyltransferase-like protein FUM17.